The primary structure comprises 506 residues: Glutamate--tRNA ligase (506 aa).

The 'HIGH' region signature appears at 29-39 (PSPTGTPHVGL). A 'KMSKS' region motif is present at residues 273 to 277 (KLSKR). Lys276 contacts ATP.

This sequence belongs to the class-I aminoacyl-tRNA synthetase family. Glutamate--tRNA ligase type 1 subfamily. In terms of assembly, monomer.

The protein resides in the cytoplasm. It carries out the reaction tRNA(Glu) + L-glutamate + ATP = L-glutamyl-tRNA(Glu) + AMP + diphosphate. In terms of biological role, catalyzes the attachment of glutamate to tRNA(Glu) in a two-step reaction: glutamate is first activated by ATP to form Glu-AMP and then transferred to the acceptor end of tRNA(Glu). This chain is Glutamate--tRNA ligase, found in Paenarthrobacter aurescens (strain TC1).